A 60-amino-acid chain; its full sequence is Large ribosomal subunit protein bL32 (60 aa).

The interval 1-46 is disordered; the sequence is MAVQQNKKSPSKRGMHRSHNALNTPGTAIEPTTGEVHLRHHISPTG. The span at 9–19 shows a compositional bias: basic residues; sequence SPSKRGMHRSH.

It belongs to the bacterial ribosomal protein bL32 family.

The protein is Large ribosomal subunit protein bL32 of Leptothrix cholodnii (strain ATCC 51168 / LMG 8142 / SP-6) (Leptothrix discophora (strain SP-6)).